Here is a 250-residue protein sequence, read N- to C-terminus: NADH-quinone oxidoreductase subunit C (250 aa).

Belongs to the complex I 30 kDa subunit family. As to quaternary structure, NDH-1 is composed of 14 different subunits. Subunits NuoB, C, D, E, F, and G constitute the peripheral sector of the complex.

It is found in the cell inner membrane. It catalyses the reaction a quinone + NADH + 5 H(+)(in) = a quinol + NAD(+) + 4 H(+)(out). In terms of biological role, NDH-1 shuttles electrons from NADH, via FMN and iron-sulfur (Fe-S) centers, to quinones in the respiratory chain. The immediate electron acceptor for the enzyme in this species is believed to be ubiquinone. Couples the redox reaction to proton translocation (for every two electrons transferred, four hydrogen ions are translocated across the cytoplasmic membrane), and thus conserves the redox energy in a proton gradient. The chain is NADH-quinone oxidoreductase subunit C from Xanthomonas campestris pv. campestris (strain 8004).